The following is a 271-amino-acid chain: 3-methyl-2-oxobutanoate hydroxymethyltransferase (271 aa).

Positions 51 and 90 each coordinate Mg(2+). 3-methyl-2-oxobutanoate is bound by residues 51-52 (DS), Asp-90, and Lys-118. Glu-120 is a binding site for Mg(2+). The Proton acceptor role is filled by Glu-186.

It belongs to the PanB family. As to quaternary structure, homodecamer; pentamer of dimers. Mg(2+) is required as a cofactor.

The protein resides in the cytoplasm. It carries out the reaction 3-methyl-2-oxobutanoate + (6R)-5,10-methylene-5,6,7,8-tetrahydrofolate + H2O = 2-dehydropantoate + (6S)-5,6,7,8-tetrahydrofolate. It participates in cofactor biosynthesis; (R)-pantothenate biosynthesis; (R)-pantoate from 3-methyl-2-oxobutanoate: step 1/2. Its function is as follows. Catalyzes the reversible reaction in which hydroxymethyl group from 5,10-methylenetetrahydrofolate is transferred onto alpha-ketoisovalerate to form ketopantoate. The sequence is that of 3-methyl-2-oxobutanoate hydroxymethyltransferase from Xanthomonas oryzae pv. oryzae (strain PXO99A).